The following is a 168-amino-acid chain: UPF0478 protein SH1183 (168 aa).

Residues 7–27 (IAGIIAAIAFLVLCIGIVVVL) form a helical membrane-spanning segment. The disordered stretch occupies residues 144–168 (YRNTSVGNDANHSNENYTTNVEKNF).

The protein belongs to the UPF0478 family.

Its subcellular location is the cell membrane. The chain is UPF0478 protein SH1183 from Staphylococcus haemolyticus (strain JCSC1435).